Consider the following 31-residue polypeptide: Cyclotide mech-6 (31 aa).

Residues 1–31 constitute a cross-link (cyclopeptide (Gly-Asn)); that stretch reads GVIPCGESCVFIPCISSVVGCTCKNKVCYRN. Cystine bridges form between cysteine 5/cysteine 21, cysteine 9/cysteine 23, and cysteine 14/cysteine 28.

In terms of processing, this is a cyclic peptide. Post-translationally, contains 3 disulfide bonds.

In terms of biological role, probably participates in a plant defense mechanism (Potential). Binds to and induces leakage in phospholipd membranes, particularly ones containing 1-palmitoyl-2-oleophosphatidylethanolamine (POPE). The sequence is that of Cyclotide mech-6 from Melicytus chathamicus (Chatham Island mahoe).